A 90-amino-acid chain; its full sequence is Small ribosomal subunit protein bS16 (90 aa).

Belongs to the bacterial ribosomal protein bS16 family. Part of the 30S ribosomal subunit.

The sequence is that of Small ribosomal subunit protein bS16 from Bacillus subtilis (strain 168).